A 564-amino-acid chain; its full sequence is Urease subunit alpha (564 aa).

Positions 126-564 (GGIDTHIHFI…LPMAQRYFLF (439 aa)) constitute a Urease domain. The Ni(2+) site is built by His131, His133, and Lys214. Lys214 is modified (N6-carboxylysine). His216 is a substrate binding site. The Ni(2+) site is built by His243 and His269. Residue His317 is the Proton donor of the active site. Asp357 is a Ni(2+) binding site.

It belongs to the metallo-dependent hydrolases superfamily. Urease alpha subunit family. In terms of assembly, heterotrimer of UreA (gamma), UreB (beta) and UreC (alpha) subunits. Three heterotrimers associate to form the active enzyme. Ni cation serves as cofactor. In terms of processing, carboxylation allows a single lysine to coordinate two nickel ions.

Its subcellular location is the cytoplasm. The catalysed reaction is urea + 2 H2O + H(+) = hydrogencarbonate + 2 NH4(+). It participates in nitrogen metabolism; urea degradation; CO(2) and NH(3) from urea (urease route): step 1/1. This Burkholderia pseudomallei (strain 1710b) protein is Urease subunit alpha.